The primary structure comprises 331 residues: MNYFDLPKIDLHCHLDGSVRPQTIIDLADEQNLTLPSRDINVIKEMMVAPETCPNLDEYLKRFELPGMVMQTAEALERISFELFEDAANENVKYLEVRFGPLLHQVKGLSLDDIMDSVVRGMKRAEAQYDIHGNYILSILRTMPKDQIKAVLEAGAKHLNDGIVAFDLAGSEVPGFCHEFVPYAQYAKELGYRITIHAGEQGAGQNVYDAISLLGAERVGHGIFIHNHPEAYQLVKGEEVALETCPSSNVQTKAVNSLSEHPIKAFYKDGIAVTINTDNRTVSNTTMTDEVRKVVEAFELTEAEYFDIYTISVNNAFTSDAVKQHLLSFAQ.

Zn(2+) contacts are provided by His-12 and His-14. Residues His-14, Asp-16, and Gly-170 each coordinate substrate. His-197 is a binding site for Zn(2+). The active-site Proton donor is the Glu-200. Asp-278 contributes to the Zn(2+) binding site.

It belongs to the metallo-dependent hydrolases superfamily. Adenosine and AMP deaminases family. Adenosine deaminase subfamily. It depends on Zn(2+) as a cofactor.

The enzyme catalyses adenosine + H2O + H(+) = inosine + NH4(+). It catalyses the reaction 2'-deoxyadenosine + H2O + H(+) = 2'-deoxyinosine + NH4(+). In terms of biological role, catalyzes the hydrolytic deamination of adenosine and 2-deoxyadenosine. The protein is Adenosine deaminase of Vibrio vulnificus (strain CMCP6).